The sequence spans 338 residues: Isopentenyl-diphosphate delta-isomerase (338 aa).

13–14 (RK) lines the substrate pocket. Residues 72–74 (AMT), Ser102, and Asn130 contribute to the FMN site. Substrate is bound at residue 102 to 104 (SQR). Substrate is bound at residue Gln165. Glu166 is a binding site for Mg(2+). FMN is bound by residues Lys197, Thr227, 274–276 (GIR), and 295–296 (AR).

This sequence belongs to the IPP isomerase type 2 family. As to quaternary structure, homooctamer. Dimer of tetramers. FMN is required as a cofactor. Requires NADPH as cofactor. It depends on Mg(2+) as a cofactor.

The protein resides in the cytoplasm. The enzyme catalyses isopentenyl diphosphate = dimethylallyl diphosphate. In terms of biological role, involved in the biosynthesis of isoprenoids. Catalyzes the 1,3-allylic rearrangement of the homoallylic substrate isopentenyl (IPP) to its allylic isomer, dimethylallyl diphosphate (DMAPP). The polypeptide is Isopentenyl-diphosphate delta-isomerase (Deinococcus radiodurans (strain ATCC 13939 / DSM 20539 / JCM 16871 / CCUG 27074 / LMG 4051 / NBRC 15346 / NCIMB 9279 / VKM B-1422 / R1)).